The chain runs to 177 residues: Adenine phosphoribosyltransferase (177 aa).

The protein belongs to the purine/pyrimidine phosphoribosyltransferase family. As to quaternary structure, homodimer.

It localises to the cytoplasm. It catalyses the reaction AMP + diphosphate = 5-phospho-alpha-D-ribose 1-diphosphate + adenine. It functions in the pathway purine metabolism; AMP biosynthesis via salvage pathway; AMP from adenine: step 1/1. Functionally, catalyzes a salvage reaction resulting in the formation of AMP, that is energically less costly than de novo synthesis. In Chlorobium phaeobacteroides (strain BS1), this protein is Adenine phosphoribosyltransferase.